A 528-amino-acid polypeptide reads, in one-letter code: Low affinity inorganic phosphate transporter 4 (528 aa).

Topologically, residues 1-18 are cytoplasmic; that stretch reads MGLEVLEALDSARTQWYH. The helical transmembrane segment at 19 to 39 threads the bilayer; sequence VTAIVIAGMGFFTDAYDLFCI. Residues 40 to 68 lie on the Extracellular side of the membrane; the sequence is STVSKLLGRLYYFDPSTNKPGKLPPSVNN. Residues 69-89 form a helical membrane-spanning segment; that stretch reads VVTGVALVGTLSGQLVFGWLG. The Cytoplasmic portion of the chain corresponds to 90-96; sequence DKLGRKK. A helical transmembrane segment spans residues 97-117; that stretch reads VYGVTLIIMVACAICSGLSFG. The Extracellular segment spans residues 118–122; it reads SSAKS. Residues 123–143 traverse the membrane as a helical segment; sequence VMITLCFFRFWLGFGIGGDYP. At 144 to 158 the chain is on the cytoplasmic side; sequence LSATIMSEYANKRTR. Residues 159-179 form a helical membrane-spanning segment; the sequence is GAFIAAVFAMQGVGIIFAGLV. Topologically, residues 180 to 208 are extracellular; sequence SMVFSGIFKAYYQAPRFNEDPILSTQPEG. A helical transmembrane segment spans residues 209 to 229; sequence DLLWRLILMIGAVPAAMTYYW. Topologically, residues 230-292 are cytoplasmic; that stretch reads RMKMPETGRY…SEFFNRHGRH (63 aa). A helical transmembrane segment spans residues 293 to 313; sequence LIGTMSCWFLLDIAFYSQNLT. Residues 314–341 are Extracellular-facing; the sequence is QKDIYPAMGLIRQDKEMNAIDEVFQTSR. Residues 342-362 form a helical membrane-spanning segment; sequence AMFVVALFGTFPGYWFTVFFI. Over 363-371 the chain is Cytoplasmic; the sequence is EKLGRFKIQ. Residues 372 to 392 form a helical membrane-spanning segment; the sequence is LVGFFMMSFFMFVIGVKYEYL. Residues 393–401 are Extracellular-facing; it reads KDENKNLFA. The chain crosses the membrane as a helical span at residues 402 to 422; the sequence is LLYGLTFFFANFGPNSTTFVL. The Cytoplasmic portion of the chain corresponds to 423–433; it reads PAELFPTRVRS. Residues 434-454 traverse the membrane as a helical segment; it reads TCHAFSAASGKAGAMVGAFGI. The Extracellular portion of the chain corresponds to 455–468; it reads QYYTLDGTPRKIRR. A helical transmembrane segment spans residues 469–489; the sequence is AMMILAFTNLIGFFCTFLVTE. At 490-528 the chain is on the cytoplasmic side; that stretch reads TKGRSLEEISGEDGRESELTATPNDRAPGIRQDSRTEKM. Residues 497–507 are compositionally biased toward basic and acidic residues; it reads EISGEDGRESE. A disordered region spans residues 497–528; it reads EISGEDGRESELTATPNDRAPGIRQDSRTEKM.

Belongs to the major facilitator superfamily. Phosphate:H(+) symporter (TC 2.A.1.9) family. In terms of tissue distribution, mostly expressed in mycorrhizal roots. Also observed in root tips of non-mycorrhizal roots, in a phosphate (Pi) depended-manner, highest expression levels being observed in low Pi conditions.

It localises to the cell membrane. It carries out the reaction phosphate(in) + H(+)(in) = phosphate(out) + H(+)(out). In terms of biological role, low-affinity transporter for external inorganic phosphate (Pi) probably involved in the acquisition of phosphate released by arbuscular mycorrhizal (AM) fungi (e.g. Gigaspora gigantea, Glomus versiforme and G.intraradices) during AM symbiosis; required for propper mycorrhizal arbuscule morphology. Acts as a Pi-sensing machinery at the root tip level, independently of AM fungi, involved in the regulation of early root branching and lateral roots formation. The sequence is that of Low affinity inorganic phosphate transporter 4 from Medicago truncatula (Barrel medic).